The sequence spans 6061 residues: Intermembrane lipid transfer protein vps13B (6061 aa).

Positions 2-115 constitute a Chorein N-terminal domain; it reads FESLVADIIA…QLELKRKKLE (114 aa). Disordered stretches follow at residues 590 to 623, 803 to 828, 1386 to 1414, 1604 to 1644, 2747 to 2784, 2950 to 2972, 3364 to 3401, 3855 to 3876, 4011 to 4068, 4107 to 4132, 4262 to 4297, 4321 to 4442, 4601 to 4631, 4753 to 4797, 4861 to 4882, 5003 to 5030, and 5372 to 5429; these read PKYK…NNNK, DIKN…NNKN, QQQQ…NVSS, SSNN…GTLS, QTNQ…EDQE, GLNN…NSST, LNRN…DDDD, QQQQ…RNKK, QQQQ…FKNN, ELEK…RPDE, NSSN…YNGR, SQSI…TSPG, TSSP…KKSL, NNNN…TQEF, NAGG…SISQ, LATK…DGIE, and NINN…IGQD. Residues 595–614 are compositionally biased toward basic and acidic residues; sequence HQENKENKENQENQENENKN. Residues 1395–1406 show a composition bias toward basic and acidic residues; the sequence is QQQKEEEQHGGE. A compositionally biased stretch (polar residues) spans 2747-2756; the sequence is QTNQNNQKNR. Residues 2774 to 2784 show a composition bias toward acidic residues; the sequence is NDNDEYDEDQE. Residues 3388–3401 are compositionally biased toward acidic residues; the sequence is IDDDDGDGDDDDDD. The segment covering 4015–4024 has biased composition (basic and acidic residues); sequence QEKEKEIEKE. Residues 4031-4040 show a composition bias toward low complexity; sequence LKNNNNISIN. The span at 4041-4057 shows a compositional bias: acidic residues; sequence DNDDDDDDDDNDNDENN. The segment covering 4058–4068 has biased composition (low complexity); that stretch reads NENYEFNFKNN. Residues 4107–4120 show a composition bias toward basic and acidic residues; that stretch reads ELEKKKRERKENSK. Low complexity-rich tracts occupy residues 4330–4383 and 4399–4429; these read TTTT…VGSN and NNNN…NNNN. A compositionally biased stretch (polar residues) spans 4430–4441; sequence SNDNQVNFSTSP. Low complexity-rich tracts occupy residues 4601-4617 and 4753-4784; these read TSSP…NYNN and NNNN…SNEN. Positions 4785–4794 are enriched in polar residues; the sequence is SQDQPPSIKT. 2 stretches are compositionally biased toward low complexity: residues 5013 to 5030 and 5372 to 5384; these read DNSN…DGIE and NINN…NNDN. The segment covering 5385-5409 has biased composition (basic and acidic residues); sequence NKNKNNNDKNKNNDKNNKNNNDKNN. Residues 5410–5421 show a composition bias toward low complexity; it reads NDNNNNNNNNNN.

Belongs to the VPS13 family.

It is found in the membrane. Its function is as follows. Mediates the transfer of lipids between membranes at organelle contact sites. The chain is Intermembrane lipid transfer protein vps13B (vps13B) from Dictyostelium discoideum (Social amoeba).